The chain runs to 74 residues: Turripeptide OL135 (74 aa).

The N-terminal stretch at 1-20 (MKVPIVLMLVLLLIMPLSDG) is a signal peptide. Positions 21 to 28 (YERKRXXX) are excised as a propeptide.

Belongs to the conopeptide P-like superfamily. Contains 3 disulfide bonds. In terms of tissue distribution, expressed by the venom duct.

The protein resides in the secreted. In terms of biological role, acts as a neurotoxin by inhibiting an ion channel. This is Turripeptide OL135 from Iotyrris olangoensis (Sea snail).